Here is a 158-residue protein sequence, read N- to C-terminus: Transcription elongation factor GreA (158 aa).

The protein belongs to the GreA/GreB family.

Its function is as follows. Necessary for efficient RNA polymerase transcription elongation past template-encoded arresting sites. The arresting sites in DNA have the property of trapping a certain fraction of elongating RNA polymerases that pass through, resulting in locked ternary complexes. Cleavage of the nascent transcript by cleavage factors such as GreA or GreB allows the resumption of elongation from the new 3'terminus. GreA releases sequences of 2 to 3 nucleotides. In Hamiltonella defensa subsp. Acyrthosiphon pisum (strain 5AT), this protein is Transcription elongation factor GreA.